The primary structure comprises 227 residues: Orotidine 5'-phosphate decarboxylase (227 aa).

Residues Asp-8, Lys-30, 58 to 67 (DLKVHDIPNT), Thr-117, Arg-177, Gln-186, Gly-206, and Arg-207 contribute to the substrate site. Lys-60 (proton donor) is an active-site residue.

The protein belongs to the OMP decarboxylase family. Type 1 subfamily. Homodimer.

It carries out the reaction orotidine 5'-phosphate + H(+) = UMP + CO2. The protein operates within pyrimidine metabolism; UMP biosynthesis via de novo pathway; UMP from orotate: step 2/2. In terms of biological role, catalyzes the decarboxylation of orotidine 5'-monophosphate (OMP) to uridine 5'-monophosphate (UMP). This is Orotidine 5'-phosphate decarboxylase from Campylobacter fetus subsp. fetus (strain 82-40).